A 385-amino-acid polypeptide reads, in one-letter code: Probable alpha-galactosidase (385 aa).

An N-terminal signal peptide occupies residues 1 to 19 (MMKIAATLLATIALATVNA). 2 cysteine pairs are disulfide-bonded: C40-C72 and C119-C149. D147 functions as the Nucleophile in the catalytic mechanism. 180-184 (DWGYE) serves as a coordination point for substrate. The Proton donor role is filled by D202.

Belongs to the glycosyl hydrolase 27 family.

The enzyme catalyses Hydrolysis of terminal, non-reducing alpha-D-galactose residues in alpha-D-galactosides, including galactose oligosaccharides, galactomannans and galactolipids.. This chain is Probable alpha-galactosidase (melA), found in Dictyostelium discoideum (Social amoeba).